Reading from the N-terminus, the 371-residue chain is Cytoplasmic tRNA 2-thiolation protein 1 (371 aa).

The protein belongs to the TtcA family. CTU1/NCS6/ATPBD3 subfamily.

The protein resides in the cytoplasm. The protein operates within tRNA modification; 5-methoxycarbonylmethyl-2-thiouridine-tRNA biosynthesis. In terms of biological role, plays a central role in 2-thiolation of mcm(5)S(2)U at tRNA wobble positions of tRNA(Lys), tRNA(Glu) and tRNA(Gln). Directly binds tRNAs and probably acts by catalyzing adenylation of tRNAs, an intermediate required for 2-thiolation. It is unclear whether it acts as a sulfurtransferase that transfers sulfur from thiocarboxylated URM1 onto the uridine of tRNAs at wobble position. Prior mcm(5) tRNA modification by the elongator complex is required for 2-thiolation. May also be involved in protein urmylation. The polypeptide is Cytoplasmic tRNA 2-thiolation protein 1 (Kluyveromyces lactis (strain ATCC 8585 / CBS 2359 / DSM 70799 / NBRC 1267 / NRRL Y-1140 / WM37) (Yeast)).